The sequence spans 404 residues: Probable tRNA sulfurtransferase (404 aa).

In terms of domain architecture, THUMP spans 60 to 165; the sequence is QPVVEALKLV…DEAAYISYEE (106 aa). Residues 183–184, 208–209, arginine 265, glycine 287, and glutamine 296 contribute to the ATP site; these read ML and HF.

It belongs to the ThiI family.

The protein resides in the cytoplasm. The enzyme catalyses [ThiI sulfur-carrier protein]-S-sulfanyl-L-cysteine + a uridine in tRNA + 2 reduced [2Fe-2S]-[ferredoxin] + ATP + H(+) = [ThiI sulfur-carrier protein]-L-cysteine + a 4-thiouridine in tRNA + 2 oxidized [2Fe-2S]-[ferredoxin] + AMP + diphosphate. It carries out the reaction [ThiS sulfur-carrier protein]-C-terminal Gly-Gly-AMP + S-sulfanyl-L-cysteinyl-[cysteine desulfurase] + AH2 = [ThiS sulfur-carrier protein]-C-terminal-Gly-aminoethanethioate + L-cysteinyl-[cysteine desulfurase] + A + AMP + 2 H(+). It functions in the pathway cofactor biosynthesis; thiamine diphosphate biosynthesis. Its function is as follows. Catalyzes the ATP-dependent transfer of a sulfur to tRNA to produce 4-thiouridine in position 8 of tRNAs, which functions as a near-UV photosensor. Also catalyzes the transfer of sulfur to the sulfur carrier protein ThiS, forming ThiS-thiocarboxylate. This is a step in the synthesis of thiazole, in the thiamine biosynthesis pathway. The sulfur is donated as persulfide by IscS. This Streptococcus pyogenes serotype M5 (strain Manfredo) protein is Probable tRNA sulfurtransferase.